The chain runs to 525 residues: COP9 signalosome complex subunit 1b (525 aa).

Residues 298-460 (HFLNANFDHC…KILFAKEADQ (163 aa)) form the PCI domain.

The protein belongs to the CSN1 family. In terms of assembly, component of the CSN complex, probably composed of CSN1b, alien/CSN2, CSN3, CSN4, CSN5, CSN6, CSN7 and CSN8.

It is found in the cytoplasm. The protein localises to the nucleus. Its function is as follows. Essential component of the COP9 signalosome complex (CSN), a complex involved in various cellular and developmental processes. The CSN complex is an essential regulator of the ubiquitin (Ubl) conjugation pathway by mediating the deneddylation of the cullin subunits of the SCF-type E3 ligase complexes, leading to decrease the Ubl ligase activity of SCF. The CSN complex plays an essential role in oogenesis and embryogenesis and is required for proper photoreceptor R cell differentiation and promote lamina glial cell migration or axon targeting. It also promotes Ubl-dependent degradation of cyclin E (CycE) during early oogenesis. In Drosophila melanogaster (Fruit fly), this protein is COP9 signalosome complex subunit 1b (CSN1b).